The chain runs to 133 residues: Small ribosomal subunit protein uS9 (133 aa).

This sequence belongs to the universal ribosomal protein uS9 family.

In Picrophilus torridus (strain ATCC 700027 / DSM 9790 / JCM 10055 / NBRC 100828 / KAW 2/3), this protein is Small ribosomal subunit protein uS9.